A 208-amino-acid chain; its full sequence is Small ribosomal subunit protein uS4 (208 aa).

The region spanning 98-163 (SRLDNVVYRA…LTPFVIARAV (66 aa)) is the S4 RNA-binding domain.

This sequence belongs to the universal ribosomal protein uS4 family. Part of the 30S ribosomal subunit. Contacts protein S5. The interaction surface between S4 and S5 is involved in control of translational fidelity.

In terms of biological role, one of the primary rRNA binding proteins, it binds directly to 16S rRNA where it nucleates assembly of the body of the 30S subunit. Functionally, with S5 and S12 plays an important role in translational accuracy. The chain is Small ribosomal subunit protein uS4 from Acidothermus cellulolyticus (strain ATCC 43068 / DSM 8971 / 11B).